Consider the following 141-residue polypeptide: Galactose-6-phosphate isomerase subunit LacA (141 aa).

It belongs to the LacAB/RpiB family. Heteromultimeric protein consisting of LacA and LacB.

The catalysed reaction is aldehydo-D-galactose 6-phosphate = keto-D-tagatose 6-phosphate. The protein operates within carbohydrate metabolism; D-galactose 6-phosphate degradation; D-tagatose 6-phosphate from D-galactose 6-phosphate: step 1/1. The sequence is that of Galactose-6-phosphate isomerase subunit LacA from Streptococcus equi subsp. equi (strain 4047).